A 517-amino-acid chain; its full sequence is Bifunctional purine biosynthesis protein PurH (517 aa).

The 145-residue stretch at Met-1–Val-145 folds into the MGS-like domain.

Belongs to the PurH family.

The enzyme catalyses (6R)-10-formyltetrahydrofolate + 5-amino-1-(5-phospho-beta-D-ribosyl)imidazole-4-carboxamide = 5-formamido-1-(5-phospho-D-ribosyl)imidazole-4-carboxamide + (6S)-5,6,7,8-tetrahydrofolate. The catalysed reaction is IMP + H2O = 5-formamido-1-(5-phospho-D-ribosyl)imidazole-4-carboxamide. It participates in purine metabolism; IMP biosynthesis via de novo pathway; 5-formamido-1-(5-phospho-D-ribosyl)imidazole-4-carboxamide from 5-amino-1-(5-phospho-D-ribosyl)imidazole-4-carboxamide (10-formyl THF route): step 1/1. The protein operates within purine metabolism; IMP biosynthesis via de novo pathway; IMP from 5-formamido-1-(5-phospho-D-ribosyl)imidazole-4-carboxamide: step 1/1. The chain is Bifunctional purine biosynthesis protein PurH from Prochlorococcus marinus (strain MIT 9312).